Consider the following 111-residue polypeptide: MLCSLLALLLGTFFGVRSQTIHQWPATLVQPVGSPLSLECTVEGTSNPNLYWYRQAAGRGLQLLFYSVGIGQISSEVPQNLSASRPQDRQFILSSKKLLLSDSGFYLCAWS.

Positions 1-18 (MLCSLLALLLGTFFGVRS) are cleaved as a signal peptide. The Ig-like domain maps to 19–111 (QTIHQWPATL…DSGFYLCAWS (93 aa)). C40 and C108 are joined by a disulfide. Residue N80 is glycosylated (N-linked (GlcNAc...) asparagine).

As to quaternary structure, alpha-beta TR is a heterodimer composed of an alpha and beta chain; disulfide-linked. The alpha-beta TR is associated with the transmembrane signaling CD3 coreceptor proteins to form the TR-CD3 (TcR or TCR). The assembly of alpha-beta TR heterodimers with CD3 occurs in the endoplasmic reticulum where a single alpha-beta TR heterodimer associates with one CD3D-CD3E heterodimer, one CD3G-CD3E heterodimer and one CD247 homodimer forming a stable octameric structure. CD3D-CD3E and CD3G-CD3E heterodimers preferentially associate with TR alpha and TR beta chains, respectively. The association of the CD247 homodimer is the last step of TcR assembly in the endoplasmic reticulum and is required for transport to the cell surface.

It is found in the cell membrane. Functionally, v region of the variable domain of T cell receptor (TR) beta chain that participates in the antigen recognition. Alpha-beta T cell receptors are antigen specific receptors which are essential to the immune response and are present on the cell surface of T lymphocytes. Recognize peptide-major histocompatibility (MH) (pMH) complexes that are displayed by antigen presenting cells (APC), a prerequisite for efficient T cell adaptive immunity against pathogens. Binding of alpha-beta TR to pMH complex initiates TR-CD3 clustering on the cell surface and intracellular activation of LCK that phosphorylates the ITAM motifs of CD3G, CD3D, CD3E and CD247 enabling the recruitment of ZAP70. In turn ZAP70 phosphorylates LAT, which recruits numerous signaling molecules to form the LAT signalosome. The LAT signalosome propagates signal branching to three major signaling pathways, the calcium, the mitogen-activated protein kinase (MAPK) kinase and the nuclear factor NF-kappa-B (NF-kB) pathways, leading to the mobilization of transcription factors that are critical for gene expression and essential for T cell growth and differentiation. The T cell repertoire is generated in the thymus, by V-(D)-J rearrangement. This repertoire is then shaped by intrathymic selection events to generate a peripheral T cell pool of self-MH restricted, non-autoaggressive T cells. Post-thymic interaction of alpha-beta TR with the pMH complexes shapes TR structural and functional avidity. The protein is T cell receptor beta variable 30 of Homo sapiens (Human).